The following is a 120-amino-acid chain: Large ribosomal subunit protein uL29 (120 aa).

It belongs to the universal ribosomal protein uL29 family. In terms of assembly, component of the large ribosomal subunit. Mature ribosomes consist of a small (40S) and a large (60S) subunit. The 40S subunit contains about 32 different proteins and 1 molecule of RNA (18S). The 60S subunit contains 45 different proteins and 3 molecules of RNA (25S, 5.8S and 5S).

The protein resides in the cytoplasm. Component of the ribosome, a large ribonucleoprotein complex responsible for the synthesis of proteins in the cell. The small ribosomal subunit (SSU) binds messenger RNAs (mRNAs) and translates the encoded message by selecting cognate aminoacyl-transfer RNA (tRNA) molecules. The large subunit (LSU) contains the ribosomal catalytic site termed the peptidyl transferase center (PTC), which catalyzes the formation of peptide bonds, thereby polymerizing the amino acids delivered by tRNAs into a polypeptide chain. The nascent polypeptides leave the ribosome through a tunnel in the LSU and interact with protein factors that function in enzymatic processing, targeting, and the membrane insertion of nascent chains at the exit of the ribosomal tunnel. This is Large ribosomal subunit protein uL29 from Candida albicans (strain SC5314 / ATCC MYA-2876) (Yeast).